The following is a 327-amino-acid chain: Aspartate--ammonia ligase (327 aa).

This sequence belongs to the class-II aminoacyl-tRNA synthetase family. AsnA subfamily.

Its subcellular location is the cytoplasm. It catalyses the reaction L-aspartate + NH4(+) + ATP = L-asparagine + AMP + diphosphate + H(+). The protein operates within amino-acid biosynthesis; L-asparagine biosynthesis; L-asparagine from L-aspartate (ammonia route): step 1/1. This chain is Aspartate--ammonia ligase, found in Bacillus cereus (strain B4264).